A 214-amino-acid polypeptide reads, in one-letter code: Non-structural protein NP-1 (214 aa).

Disordered stretches follow at residues 1 to 85 (MSSE…TRTN) and 192 to 214 (ESEE…NASN). Over residues 33–43 (SRSRSPIRRHG) the composition is skewed to basic residues. The segment covering 44 to 55 (EKNLEYAHHNNQ) has biased composition (basic and acidic residues). Residues 56-71 (DNRQSSYTASKTSDQA) are compositionally biased toward polar residues. Acidic residues predominate over residues 192 to 201 (ESEEVTDEEM).

It belongs to the Bocaparvovirus Non-structural protein NP-1 family.

It localises to the host nucleus. Functionally, required for the expression of the capsid proteins. Performs the splicing and internal polyadenylation of the viral capsid-encoding mRNA precursor, which allows its maturation and expression. Transactivates the viral promoter. The polypeptide is Non-structural protein NP-1 (NP1) (Human bocavirus 4 (HBoV4)).